We begin with the raw amino-acid sequence, 350 residues long: Probable aldo-keto reductase 1 (350 aa).

Tyr-67 serves as the catalytic Proton donor. A substrate-binding site is contributed by His-135. 214 to 224 (SPLGKGFFSSG) is a binding site for NADP(+).

This sequence belongs to the aldo/keto reductase family.

The polypeptide is Probable aldo-keto reductase 1 (Oryza sativa subsp. indica (Rice)).